The primary structure comprises 486 residues: Vanillin dehydrogenase (486 aa).

NAD(+)-binding positions include Gly210 to Pro211, Gly230 to Ser231, and Glu252 to Gly254. The Proton acceptor role is filled by Glu252. Catalysis depends on Cys286, which acts as the Nucleophile. NAD(+) is bound at residue Glu380–Phe382.

Belongs to the aldehyde dehydrogenase family.

The catalysed reaction is vanillin + NAD(+) + H2O = vanillate + NADH + 2 H(+). Its function is as follows. Catalyzes NAD(+)-dependent oxidation of vanillin to vanillate. Also oxidizes other aromatic aldehydes including benzaldehyde, coniferyl aldehyde and cinnamaldehyde, but has a preference for vanillin. Not active with NADP(+). Involved in the degradation pathway of lignin-derived aromatic compounds of plant cell walls. Catalyzes the conversion of vanillin to vanillate due to toxicity of vanillin to the cells. This chain is Vanillin dehydrogenase, found in Amycolatopsis sp. (strain ATCC 39116 / 75iv2).